A 544-amino-acid polypeptide reads, in one-letter code: Zinc finger and SCAN domain-containing protein 25 (544 aa).

Glycyl lysine isopeptide (Lys-Gly) (interchain with G-Cter in SUMO2) cross-links involve residues K3 and K22. The SCAN box domain maps to 42–124 (RLRFRQFRYQ…AMVEDLTERA (83 aa)). K128 participates in a covalent cross-link: Glycyl lysine isopeptide (Lys-Gly) (interchain with G-Cter in SUMO2). The disordered stretch occupies residues 157 to 189 (VEVKPEWGMPPGEGVQGPDPGTEEQLSQDPGDE). Residues K278 and K285 each participate in a glycyl lysine isopeptide (Lys-Gly) (interchain with G-Cter in SUMO2) cross-link. 6 consecutive C2H2-type zinc fingers follow at residues 348–370 (FQCP…QRTH), 375–397 (YGCV…QRTH), 403–425 (YVCS…QRSH), 431–453 (YKCG…RRTH), 459–480 (YTCE…RRAH), and 486–508 (YGCQ…QRIH). A C2H2-type 7; degenerate zinc finger spans residues 514–536 (YHCPACGRSFNQRSILNRHQKTQ).

This sequence belongs to the krueppel C2H2-type zinc-finger protein family.

Its subcellular location is the nucleus. May be involved in transcriptional regulation. This chain is Zinc finger and SCAN domain-containing protein 25 (ZSCAN25), found in Homo sapiens (Human).